A 146-amino-acid chain; its full sequence is Decoration protein (146 aa).

Homotrimer. Interacts with the major capsid protein.

It is found in the virion. Functionally, cooperatively binds the expanded capsid, thereby stabilizing the mature capsid shell and allowing the large viral DNA to be packaged. Trimers of capsid decoration proteins molecules are located at local and icosahedral threefold axes and stabilize the expanded capsid, which shows increased spacing between capsomers. This chain is Decoration protein, found in Thermus thermophilus (Thermus thermophilus phage P23-45).